The sequence spans 314 residues: tRNA dimethylallyltransferase (314 aa).

Residue 13–20 (GPTASGKS) participates in ATP binding. 15 to 20 (TASGKS) provides a ligand contact to substrate. Interaction with substrate tRNA regions lie at residues 38 to 41 (DSMQ) and 161 to 165 (QRIAR).

It belongs to the IPP transferase family. Monomer. Mg(2+) is required as a cofactor.

It carries out the reaction adenosine(37) in tRNA + dimethylallyl diphosphate = N(6)-dimethylallyladenosine(37) in tRNA + diphosphate. In terms of biological role, catalyzes the transfer of a dimethylallyl group onto the adenine at position 37 in tRNAs that read codons beginning with uridine, leading to the formation of N6-(dimethylallyl)adenosine (i(6)A). This Parvibaculum lavamentivorans (strain DS-1 / DSM 13023 / NCIMB 13966) protein is tRNA dimethylallyltransferase.